We begin with the raw amino-acid sequence, 587 residues long: Trans-activating transcriptional regulatory protein (587 aa).

The protein belongs to the nucleopolyhedrovirus IE-1 protein family.

In terms of biological role, regulatory transcriptional protein, which trans-activates gene expression from early baculovirus promoters. Can also trans-activate its own promoter, suggesting that it is autoregulated during normal infection of insect cells. This Bombyx mori nuclear polyhedrosis virus (BmNPV) protein is Trans-activating transcriptional regulatory protein (IE1).